A 247-amino-acid polypeptide reads, in one-letter code: Pyrroloquinoline-quinone synthase (247 aa).

The protein belongs to the PqqC family.

It carries out the reaction 6-(2-amino-2-carboxyethyl)-7,8-dioxo-1,2,3,4,7,8-hexahydroquinoline-2,4-dicarboxylate + 3 O2 = pyrroloquinoline quinone + 2 H2O2 + 2 H2O + H(+). The protein operates within cofactor biosynthesis; pyrroloquinoline quinone biosynthesis. Functionally, ring cyclization and eight-electron oxidation of 3a-(2-amino-2-carboxyethyl)-4,5-dioxo-4,5,6,7,8,9-hexahydroquinoline-7,9-dicarboxylic-acid to PQQ. The sequence is that of Pyrroloquinoline-quinone synthase from Rhizobium rhizogenes (strain K84 / ATCC BAA-868) (Agrobacterium radiobacter).